The sequence spans 397 residues: DnaJ protein homolog 1 (397 aa).

One can recognise a J domain in the interval 1-52 (KNASPDDLKKAYRKAAIKNHPDKGGDPEKFKELAQAYDVLSDPEKREIYDQY). The CR-type zinc-finger motif lies at 114–198 (GTSKKLSLSR…CKGEKVVQEK (85 aa)). CXXCXGXG motif repeat units follow at residues 127 to 134 (CSKCNGKG), 143 to 150 (CASCQGSG), 170 to 177 (CNDCKGTG), and 186 to 193 (CPLCKGEK). The tract at residues 367–397 (MRRKQHQHAQEAYDEDDEGHGGGQRVQCAQQ) is disordered. At Cys394 the chain carries Cysteine methyl ester. The S-farnesyl cysteine moiety is linked to residue Cys394. Positions 395 to 397 (AQQ) are cleaved as a propeptide — removed in mature form.

It localises to the membrane. In terms of biological role, plays a continuous role in plant development probably in the structural organization of compartments. The protein is DnaJ protein homolog 1 (DNAJ1) of Allium porrum (Leek).